The chain runs to 138 residues: Ribulose bisphosphate carboxylase small subunit (138 aa).

Belongs to the RuBisCO small chain family. As to quaternary structure, heterohexadecamer of 8 large and 8 small subunits.

The protein localises to the plastid. It localises to the chloroplast. In terms of biological role, ruBisCO catalyzes two reactions: the carboxylation of D-ribulose 1,5-bisphosphate, the primary event in carbon dioxide fixation, as well as the oxidative fragmentation of the pentose substrate in the photorespiration process. Both reactions occur simultaneously and in competition at the same active site. Although the small subunit is not catalytic it is essential for maximal activity. This Pyropia haitanensis (Red seaweed) protein is Ribulose bisphosphate carboxylase small subunit.